The following is a 757-amino-acid chain: Probable tRNA (uracil-O(2)-)-methyltransferase (757 aa).

Disordered regions lie at residues 55–93 and 108–138; these read EARG…GPEQ and QQEE…GDFP. The span at 72 to 84 shows a compositional bias: gly residues; it reads PGPGQGSPGGGPG. At Ser78 the chain carries Phosphoserine. The span at 123 to 136 shows a compositional bias: basic and acidic residues; sequence DSGHPGHAEGREGD. A Phosphoserine modification is found at Ser533. The C3H1-type zinc-finger motif lies at 713-743; sequence ACKTRLCWFFMHHPDGCALSTDCCPFAHGPA.

Belongs to the TRM44 family.

It is found in the cytoplasm. It carries out the reaction uridine(44) in tRNA(Ser) + S-adenosyl-L-methionine = 2'-O-methyluridine(44) in tRNA(Ser) + S-adenosyl-L-homocysteine + H(+). Probable adenosyl-L-methionine (AdoMet)-dependent tRNA (uracil-O(2)-)-methyltransferase. This chain is Probable tRNA (uracil-O(2)-)-methyltransferase (TRMT44), found in Homo sapiens (Human).